Consider the following 476-residue polypeptide: Bifunctional protein HldE (476 aa).

The segment at 1–319 (MKVSLPAFEK…EALALHHGES (319 aa)) is ribokinase. 195–198 (NMSE) contacts ATP. Residue aspartate 264 is part of the active site. The cytidylyltransferase stretch occupies residues 345–476 (MTNGCFDILH…AIIQNIMAKQ (132 aa)).

This sequence in the N-terminal section; belongs to the carbohydrate kinase PfkB family. The protein in the C-terminal section; belongs to the cytidylyltransferase family. Homodimer.

It carries out the reaction D-glycero-beta-D-manno-heptose 7-phosphate + ATP = D-glycero-beta-D-manno-heptose 1,7-bisphosphate + ADP + H(+). It catalyses the reaction D-glycero-beta-D-manno-heptose 1-phosphate + ATP + H(+) = ADP-D-glycero-beta-D-manno-heptose + diphosphate. It functions in the pathway nucleotide-sugar biosynthesis; ADP-L-glycero-beta-D-manno-heptose biosynthesis; ADP-L-glycero-beta-D-manno-heptose from D-glycero-beta-D-manno-heptose 7-phosphate: step 1/4. The protein operates within nucleotide-sugar biosynthesis; ADP-L-glycero-beta-D-manno-heptose biosynthesis; ADP-L-glycero-beta-D-manno-heptose from D-glycero-beta-D-manno-heptose 7-phosphate: step 3/4. In terms of biological role, catalyzes the phosphorylation of D-glycero-D-manno-heptose 7-phosphate at the C-1 position to selectively form D-glycero-beta-D-manno-heptose-1,7-bisphosphate. Catalyzes the ADP transfer from ATP to D-glycero-beta-D-manno-heptose 1-phosphate, yielding ADP-D-glycero-beta-D-manno-heptose. This Shewanella sp. (strain MR-4) protein is Bifunctional protein HldE.